The chain runs to 180 residues: Probable DNA replication complex GINS protein PSF2 (180 aa).

This sequence belongs to the GINS2/PSF2 family. Component of the GINS complex which is a heterotetramer of gins1, gins2, gins3 and gins4.

The protein resides in the nucleus. In terms of biological role, required for correct functioning of the GINS complex, a complex that plays an essential role in the initiation of DNA replication, and progression of DNA replication forks. GINS complex is a core component of CDC45-MCM-GINS (CMG) helicase, the molecular machine that unwinds template DNA during replication, and around which the replisome is built. The polypeptide is Probable DNA replication complex GINS protein PSF2 (psf-2) (Caenorhabditis elegans).